Reading from the N-terminus, the 328-residue chain is Homeobox protein Hox-D1 (328 aa).

The Antp-type hexapeptide signature appears at Thr-204–Lys-209. Residues Ser-229–Glu-288 constitute a DNA-binding region (homeobox). The interval Pro-305–Ser-328 is disordered. The span at Gly-319–Ser-328 shows a compositional bias: polar residues.

The protein belongs to the Antp homeobox family. Labial subfamily.

Its subcellular location is the nucleus. Functionally, sequence-specific transcription factor which is part of a developmental regulatory system that provides cells with specific positional identities on the anterior-posterior axis. Acts on the anterior body structures. This chain is Homeobox protein Hox-D1 (HOXD1), found in Homo sapiens (Human).